A 516-amino-acid polypeptide reads, in one-letter code: Circadian clock oscillator protein KaiC (516 aa).

KaiC domains follow at residues 1 to 244 (MNQP…INIF) and 258 to 516 (ARIS…TLPE). ATP contacts are provided by Gly46, Thr47, Gly48, Lys49, Thr50, Leu51, Ser86, Lys221, Leu222, Arg223, Thr225, His227, Thr237, Thr287, Gly288, Thr289, Gly290, Lys291, Thr292, and Leu293. Thr50 serves as a coordination point for Mg(2+). Thr292 contacts Mg(2+). Glu315 serves as a coordination point for Mg(2+). ATP is bound at residue Trp328. Ser428 is subject to Phosphoserine; by autocatalysis. At Thr429 the chain carries Phosphothreonine; by autocatalysis. ATP contacts are provided by Arg448, Lys454, Met455, Arg456, Ser458, His460, and Lys462.

Belongs to the KaiC family. In terms of assembly, homohexamer; hexamerization is dependent on ATP-binding. The KaiABC complex composition changes during the circadian cycle to control KaiC phosphorylation. Complexes KaiC(6), KaiA(2-4):KaiC(6), KaiB(6):KaiC(6) and KaiC(6):KaiB(6):KaiA(12) are among the most important forms, many form cooperatively. KaiC interacts with SasA, activating its autokinase function and leading to RpaA activation. The cofactor is Mg(2+). Post-translationally, phosphorylated on serine and threonine residues by autocatalysis. Has a 4 step phosphorylation cycle; the autokinase acts first on Thr-429, then Ser-428. When Ser-428 is modified KaiC switches to an autophosphatase mode, acting first on phospho-Thr-429 then phospho-Ser-428.

It catalyses the reaction L-seryl-[protein] + ATP = O-phospho-L-seryl-[protein] + ADP + H(+). The catalysed reaction is L-threonyl-[protein] + ATP = O-phospho-L-threonyl-[protein] + ADP + H(+). It carries out the reaction ATP + H2O = ADP + phosphate + H(+). The interaction with KaiA enhances its phosphorylation status, while the interaction with KaiB decreases it. In terms of biological role, central component of the KaiABC oscillator complex, which constitutes the main circadian regulator in cyanobacteria. Complex composition changes during the circadian cycle to control KaiC phosphorylation. KaiA stimulates KaiC autophosphorylation, while KaiB sequesters KaiA, leading to KaiC autodephosphorylation. Clock output pathways impact the RpaA transcriptional regulator. KaiC enhances the autophosphorylation activity of SasA, which then transfers its phosphate group to RpaA to activate it. KaiB and KaiC together enhance the phospho-RpaA dephosphatase activity of CikA. Functionally, has a weak, temperature-independent ATPase activity; ATPase activity defines the circadian period. The phosphorylation state of KaiC modulates its ATPase activity and effects KaiB binding. The protein is Circadian clock oscillator protein KaiC of Picosynechococcus sp. (strain ATCC 27264 / PCC 7002 / PR-6) (Agmenellum quadruplicatum).